We begin with the raw amino-acid sequence, 184 residues long: Photosystem I assembly protein Ycf4 (184 aa).

The next 2 helical transmembrane spans lie at 22-42 (FCWA…GTSS) and 57-77 (IIFF…LFIS).

It belongs to the Ycf4 family.

It is found in the plastid. The protein localises to the chloroplast thylakoid membrane. Its function is as follows. Seems to be required for the assembly of the photosystem I complex. In Platanus occidentalis (Sycamore), this protein is Photosystem I assembly protein Ycf4.